The primary structure comprises 214 residues: Sugar transporter SWEET1 (214 aa).

A run of 7 helical transmembrane segments spans residues 3–23 (WMWLLSGACIVFTLGMFSSGL), 38–58 (IQFLPFLTTDLNNLGWFYYGY), 65–85 (LIIVNLIGASLQTLYMAAYIL), 93–113 (VVSQVLVSLGVLFLAHCYFTL), 125–145 (LGLFCSIFTISMYLSPLADLA), 157–177 (SFPLTVATFLTSTSWVLYGWV), and 181–201 (LYITVPNFPGIVTSLLRFWLF). The region spanning 6-89 (LLSGACIVFT…MAAYILYSLE (84 aa)) is the MtN3/slv 1 domain. The 84-residue stretch at 124 to 207 (QLGLFCSIFT…FWLFSRYPPD (84 aa)) folds into the MtN3/slv 2 domain.

This sequence belongs to the SWEET sugar transporter family.

The protein localises to the golgi apparatus membrane. The protein resides in the cell membrane. In terms of biological role, mediates sugar transport across membranes. This is Sugar transporter SWEET1 (slc50a1) from Xenopus tropicalis (Western clawed frog).